The sequence spans 137 residues: Large-conductance mechanosensitive channel (137 aa).

A run of 2 helical transmembrane segments spans residues 10–30 and 76–96; these read FAMRGNVVDLAVGVIIGAAFG and GVFIQNVFDFVIVAFAIFVAI.

The protein belongs to the MscL family. In terms of assembly, homopentamer.

It is found in the cell inner membrane. Functionally, channel that opens in response to stretch forces in the membrane lipid bilayer. May participate in the regulation of osmotic pressure changes within the cell. This chain is Large-conductance mechanosensitive channel, found in Salmonella choleraesuis (strain SC-B67).